Consider the following 139-residue polypeptide: Small ribosomal subunit protein bS16 (139 aa).

The disordered stretch occupies residues Lys84 to Ala139.

The protein belongs to the bacterial ribosomal protein bS16 family.

The polypeptide is Small ribosomal subunit protein bS16 (Streptomyces lividans).